Reading from the N-terminus, the 142-residue chain is MAAAAEGVPATRREEPPRDDAAVETAEEAKEPAEADINELCRDMFSKMATYLTGELTATSEDYKLLENMNKLTSLKYLEMKDIAINISRNLKDLNQKYAGLQPYLDQINVIEEQVAALEQAAYKLDAYSKKLEAKYKKLEKR.

Residues 1–33 form a disordered region; the sequence is MAAAAEGVPATRREEPPRDDAAVETAEEAKEPA. The residue at position 2 (Ala-2) is an N-acetylalanine. Over residues 11–33 the composition is skewed to basic and acidic residues; that stretch reads TRREEPPRDDAAVETAEEAKEPA. A coiled-coil region spans residues 79-127; it reads EMKDIAINISRNLKDLNQKYAGLQPYLDQINVIEEQVAALEQAAYKLDA.

Belongs to the BLOC1S2 family. Component of the biogenesis of lysosome-related organelles complex 1 (BLOC-1) composed of BLOC1S1, BLOC1S2, BLOC1S3, BLOC1S4, BLOC1S5, BLOC1S6, DTNBP1/BLOC1S7 and SNAPIN/BLOC1S8. Octamer composed of one copy each BLOC1S1, BLOC1S2, BLOC1S3, BLOC1S4, BLOC1S5, BLOC1S6, DTNBP1/BLOC1S7 and SNAPIN/BLOC1S8. Interacts directly with BLOC1S1, BLOC1S3, BLOC1S4, BLOC1S5 and SNAPIN. The BLOC-1 complex associates with the AP-3 protein complex and membrane protein cargos. Component of the BLOC-one-related complex (BORC) which is composed of BLOC1S1, BLOC1S2, BORCS5, BORCS6, BORCS7, BORCS8, KXD1 and SNAPIN. Interacts with gamma-tubulin. Interacts with IFT57. In terms of tissue distribution, widely expressed. Highly expressed in most brain regions, spinal cord, kidney and ovary. In the brain, expressed in the frontal cortex and the superior thalamic radiation, with the strongest expression in the granule cells of hippocampal CA1, CA3 and dentate gyrus regions. In the spinal cord, mainly expressed in the gray matter. Expression level is high in laminae I-II and V-VI small sensory neurons in the dorsal horn, as well as in the large motor neurons of the ventral horn.

The protein localises to the cytoplasm. It is found in the cytoskeleton. The protein resides in the microtubule organizing center. Its subcellular location is the centrosome. It localises to the lysosome membrane. Component of the BLOC-1 complex, a complex that is required for normal biogenesis of lysosome-related organelles (LRO), such as platelet dense granules and melanosomes. In concert with the AP-3 complex, the BLOC-1 complex is required to target membrane protein cargos into vesicles assembled at cell bodies for delivery into neurites and nerve terminals. The BLOC-1 complex, in association with SNARE proteins, is also proposed to be involved in neurite extension. As part of the BORC complex may play a role in lysosomes movement and localization at the cell periphery. Associated with the cytosolic face of lysosomes, the BORC complex may recruit ARL8B and couple lysosomes to microtubule plus-end-directed kinesin motor. May play a role in cell proliferation. The sequence is that of Biogenesis of lysosome-related organelles complex-1 subunit 2 (Bloc1s2) from Rattus norvegicus (Rat).